A 745-amino-acid polypeptide reads, in one-letter code: MQRDYLIRVETESMPDFKRLNGLMIGFVIKGEAHIYDENNMTQCNSGDIFIINHRDLYRFQLQQDGIICYIQFQMKYLADKFDDAHCLYFHLTDATTTKNIHQLRNIMARLVSTHIRHNELSKLTEQQLVIQLLMHMIHYVPRTYHSNQSILNDDKVNQVCDYIELHFHEDLSLSELSEYVGWSESHLSKKFTESLGVGFQHFLNTTRIEHAKLDLTYTDETITDIALQNGFSSAASFARTFKHFTHQTPKQYRGDRPAITENQQSAQHNYHDRELILLLNDYIEEMNHFIEDIEKMNYKEIAFKPTNQQLNQFNHIIQVGYLRNLLNTQYQSQLLTCHHDFQVNEVLAYDVMPYIMKKLNAPFTYDAEISNIFYDIDLCLDFLLDHNFSLTMHLNQYDSRDYIDAFKVFIHHVALHVSHRKDLKFNLYVTTLHNALIEMIDYFKALFPNGGLYIHLDQATERHLPLLKRLEPHIDHFVFDANSNDAVDFNKMNDDEFKTASQMIINKTNYFIDLIHRHNLKRPLILLNWNTLTGDTFITNGEYFRGGIIIEQLLKLSSKVEGIGYWLNYDLHVSHCKNERDYMNSIELFHQYNGKRPVYFTALLFNKLTSNILYSDDTCIVTGTDSNFQILLYDAKHFNPYLALDNQMNMRATEMIHLNINALEEGMYKIKHFTLDKENGALFNLWRKHHTIHGMDKDSIDYVNRMSFPKLEVYDIDITDTLALNIKMITNGIHLIEVKRYPSS.

The region spanning 158-256 is the HTH araC/xylS-type domain; it reads NQVCDYIELH…HQTPKQYRGD (99 aa). DNA-binding regions (H-T-H motif) lie at residues 175 to 196 and 223 to 246; these read SELS…TESL and ITDI…KHFT.

This is an uncharacterized protein from Staphylococcus aureus (strain MW2).